Here is a 357-residue protein sequence, read N- to C-terminus: Phosphate acyltransferase (357 aa).

This sequence belongs to the PlsX family. As to quaternary structure, homodimer. Probably interacts with PlsY.

The protein localises to the cytoplasm. The enzyme catalyses a fatty acyl-[ACP] + phosphate = an acyl phosphate + holo-[ACP]. It participates in lipid metabolism; phospholipid metabolism. Functionally, catalyzes the reversible formation of acyl-phosphate (acyl-PO(4)) from acyl-[acyl-carrier-protein] (acyl-ACP). This enzyme utilizes acyl-ACP as fatty acyl donor, but not acyl-CoA. The sequence is that of Phosphate acyltransferase from Herminiimonas arsenicoxydans.